We begin with the raw amino-acid sequence, 575 residues long: V-type ATP synthase alpha chain (575 aa).

ATP is bound at residue G238–T245.

Belongs to the ATPase alpha/beta chains family.

The enzyme catalyses ATP + H2O + 4 H(+)(in) = ADP + phosphate + 5 H(+)(out). Its function is as follows. Produces ATP from ADP in the presence of a proton gradient across the membrane. The V-type alpha chain is a catalytic subunit. This is V-type ATP synthase alpha chain (atpA) from Borreliella burgdorferi (strain ATCC 35210 / DSM 4680 / CIP 102532 / B31) (Borrelia burgdorferi).